Here is an 859-residue protein sequence, read N- to C-terminus: Low-density lipoprotein receptor-related protein 12 (859 aa).

A signal peptide spans Met1 to Ala32. Residues Glu33 to Arg492 are Extracellular-facing. 2 disulfides stabilise this stretch: Cys47–Cys76 and Cys103–Cys122. One can recognise a CUB 1 domain in the interval Cys47 to Gly159. An N-linked (GlcNAc...) asparagine glycan is attached at Asn75. Residue Asn146 is glycosylated (N-linked (GlcNAc...) asparagine). 2 LDL-receptor class A domains span residues Asn165–Ala201 and Pro214–Asp255. 7 disulfides stabilise this stretch: Cys166/Cys178, Cys173/Cys191, Cys185/Cys200, Cys215/Cys232, Cys222/Cys245, Cys239/Cys254, and Cys259/Cys285. The CUB 2 domain maps to Cys259–Asp372. 2 N-linked (GlcNAc...) asparagine glycosylation sites follow: Asn284 and Asn366. LDL-receptor class A domains are found at residues Phe374 to Thr411, Met412 to Phe449, and Phe450 to Pro486. 9 disulfides stabilise this stretch: Cys375/Cys388, Cys382/Cys401, Cys395/Cys410, Cys413/Cys426, Cys420/Cys439, Cys433/Cys448, Cys451/Cys463, Cys458/Cys476, and Cys470/Cys485. N-linked (GlcNAc...) asparagine glycosylation occurs at Asn409. Asn441 is a glycosylation site (N-linked (GlcNAc...) asparagine). Residues Val493–Gly513 traverse the membrane as a helical segment. The Cytoplasmic segment spans residues Cys514–Cys859. Disordered regions lie at residues Ala623–Lys678, Ala693–Arg723, Ser748–Asp770, and Asp801–Asp823. 2 stretches are compositionally biased toward polar residues: residues Ser748–Leu757 and Asp801–Asn814.

The protein belongs to the LDLR family. May interact with RACK1, ZFYVE9 and NMRK2. In terms of tissue distribution, widely expressed in heart, skeletal muscle, brain, lung, placenta and pancreas, but not in tissues consisting of a large number of epithelial cells, such as liver and kidney. Expressed at very low levels in a number of tumor-derived cell lines.

The protein localises to the membrane. It localises to the coated pit. Its function is as follows. Probable receptor, which may be involved in the internalization of lipophilic molecules and/or signal transduction. May act as a tumor suppressor. This Homo sapiens (Human) protein is Low-density lipoprotein receptor-related protein 12 (LRP12).